Reading from the N-terminus, the 130-residue chain is Small ribosomal subunit protein uS9 (130 aa).

This sequence belongs to the universal ribosomal protein uS9 family.

The chain is Small ribosomal subunit protein uS9 from Buchnera aphidicola subsp. Baizongia pistaciae (strain Bp).